Consider the following 169-residue polypeptide: Phosphopantetheine adenylyltransferase (169 aa).

Residue serine 8 coordinates substrate. ATP is bound by residues 8–9 (SF) and histidine 16. Substrate-binding residues include lysine 40, threonine 72, and arginine 86. ATP contacts are provided by residues 87-89 (GLR), glutamate 97, and 122-128 (YSFLSSS).

Belongs to the bacterial CoaD family. In terms of assembly, homohexamer. Mg(2+) serves as cofactor.

It is found in the cytoplasm. It carries out the reaction (R)-4'-phosphopantetheine + ATP + H(+) = 3'-dephospho-CoA + diphosphate. Its pathway is cofactor biosynthesis; coenzyme A biosynthesis; CoA from (R)-pantothenate: step 4/5. Functionally, reversibly transfers an adenylyl group from ATP to 4'-phosphopantetheine, yielding dephospho-CoA (dPCoA) and pyrophosphate. This is Phosphopantetheine adenylyltransferase from Cyanothece sp. (strain PCC 7425 / ATCC 29141).